A 161-amino-acid polypeptide reads, in one-letter code: Transcriptional repressor NrdR (161 aa).

Residues 1 to 11 (MRCPSCNSLDT) show a composition bias toward polar residues. The tract at residues 1–20 (MRCPSCNSLDTQVKDSRPTE) is disordered. The segment at 3–34 (CPSCNSLDTQVKDSRPTEDSSVIRRRRVCVTC) is a zinc-finger region. Residues 49 to 139 (LTVIKRNGRR…VYRNFREAKD (91 aa)) enclose the ATP-cone domain.

The protein belongs to the NrdR family. Requires Zn(2+) as cofactor.

Its function is as follows. Negatively regulates transcription of bacterial ribonucleotide reductase nrd genes and operons by binding to NrdR-boxes. In Bradyrhizobium sp. (strain ORS 278), this protein is Transcriptional repressor NrdR.